A 374-amino-acid polypeptide reads, in one-letter code: Erythronate-4-phosphate dehydrogenase (374 aa).

Residues Ser45 and Thr67 each coordinate substrate. Position 147 (Asp147) interacts with NAD(+). The active site involves Arg208. Residue Asp232 participates in NAD(+) binding. Glu237 is a catalytic residue. His254 (proton donor) is an active-site residue. Gly257 is an NAD(+) binding site.

It belongs to the D-isomer specific 2-hydroxyacid dehydrogenase family. PdxB subfamily. In terms of assembly, homodimer.

It is found in the cytoplasm. The enzyme catalyses 4-phospho-D-erythronate + NAD(+) = (R)-3-hydroxy-2-oxo-4-phosphooxybutanoate + NADH + H(+). The protein operates within cofactor biosynthesis; pyridoxine 5'-phosphate biosynthesis; pyridoxine 5'-phosphate from D-erythrose 4-phosphate: step 2/5. Its function is as follows. Catalyzes the oxidation of erythronate-4-phosphate to 3-hydroxy-2-oxo-4-phosphonooxybutanoate. This chain is Erythronate-4-phosphate dehydrogenase, found in Pseudoalteromonas atlantica (strain T6c / ATCC BAA-1087).